We begin with the raw amino-acid sequence, 471 residues long: Metalloprotease TIKI homolog (471 aa).

The N-terminal stretch at 1–24 (MAAFTLWILVLNVFLLGFQARKLA) is a signal peptide. Residues 25–449 (SNLKFPIQKC…SRKAAASCTP (425 aa)) lie on the Extracellular side of the membrane. 4 N-linked (GlcNAc...) asparagine glycosylation sites follow: asparagine 226, asparagine 235, asparagine 284, and asparagine 342. The segment covering 369–402 (KAKKSLNTRRERRKGCRGRRKKSKRCQKKKKRKR) has biased composition (basic residues). Residues 369–406 (KAKKSLNTRRERRKGCRGRRKKSKRCQKKKKRKRPDYS) form a disordered region. The helical transmembrane segment at 450–470 (IWTVSLALTCAVTCLLTYSGF) threads the bilayer. Arginine 471 is a topological domain (cytoplasmic).

It belongs to the TIKI family. Mn(2+) is required as a cofactor. It depends on Co(2+) as a cofactor.

It is found in the membrane. Its function is as follows. Metalloprotease. The chain is Metalloprotease TIKI homolog from Nematostella vectensis (Starlet sea anemone).